A 383-amino-acid polypeptide reads, in one-letter code: Acetylornithine deacetylase (383 aa).

His-80 serves as a coordination point for Zn(2+). The active site involves Asp-82. Residue Asp-112 coordinates Zn(2+). Glu-144 is an active-site residue. The Zn(2+) site is built by Glu-145, Glu-169, and His-355.

Belongs to the peptidase M20A family. ArgE subfamily. Homodimer. The cofactor is Zn(2+). Co(2+) serves as cofactor. Requires glutathione as cofactor.

The protein resides in the cytoplasm. The catalysed reaction is N(2)-acetyl-L-ornithine + H2O = L-ornithine + acetate. Its pathway is amino-acid biosynthesis; L-arginine biosynthesis; L-ornithine from N(2)-acetyl-L-ornithine (linear): step 1/1. Its function is as follows. Catalyzes the hydrolysis of the amide bond of N(2)-acetylated L-amino acids. Cleaves the acetyl group from N-acetyl-L-ornithine to form L-ornithine, an intermediate in L-arginine biosynthesis pathway, and a branchpoint in the synthesis of polyamines. The polypeptide is Acetylornithine deacetylase (Klebsiella pneumoniae (strain 342)).